The sequence spans 467 residues: tRNA dimethylallyltransferase (467 aa).

The N-terminal 47 residues, 1 to 47 (MASVAAARAVPVGSGLRGLQRTLPLVVILGATGTGKSTLALQLGQRL), are a transit peptide targeting the mitochondrion. 32 to 37 (TGTGKS) is a binding site for dimethylallyl diphosphate. Interaction with substrate tRNA regions lie at residues 55–58 (DSMQ) and 183–187 (RKVAR). Residues 221–230 (FSNPCILWLH) are core aggregation region. An interaction with isopentenylpyrophosphate transferase region spans residues 233–255 (QAVLDERLDKRVDDMLAAGLLEE). Interaction with substrate tRNA stretches follow at residues 281–283 (QSI) and 313–331 (ALKQ…WVKN). The Matrin-type zinc finger occupies 395-425 (HLCDLCDRIIIGDREWAAHIKSKSHLNQLKK). The tract at residues 429-467 (LDSDAVNTIESQSVSPDHNKEPKEKGSPGQNDQELKCSV) is disordered. A compositionally biased stretch (polar residues) spans 433-444 (AVNTIESQSVSP). Phosphoserine is present on S443. Residues 445–454 (DHNKEPKEKG) show a composition bias toward basic and acidic residues. S455 bears the Phosphoserine mark.

Belongs to the IPP transferase family.

Its subcellular location is the mitochondrion. It is found in the cytoplasm. The enzyme catalyses adenosine(37) in tRNA + dimethylallyl diphosphate = N(6)-dimethylallyladenosine(37) in tRNA + diphosphate. Its function is as follows. Catalyzes the transfer of a dimethylallyl group onto the adenine at position 37 of both cytosolic and mitochondrial tRNAs, leading to the formation of N6-(dimethylallyl)adenosine (i6A37). Mediates modification of a limited subset of tRNAs: tRNA(Ser)(AGA), tRNA(Ser)(CGA), tRNA(Ser)(UGA), as well as partial modification of the selenocysteine tRNA(Ser)(UCA). TRIT1 is therefore required for selenoprotein expression. In Homo sapiens (Human), this protein is tRNA dimethylallyltransferase (TRIT1).